Consider the following 593-residue polypeptide: Pentatricopeptide repeat-containing protein At5g24830 (593 aa).

PPR repeat units follow at residues 120–154, 155–189, 190–224, 225–256, 264–298, 299–333, 334–368, 369–403, 404–438, 439–473, 474–508, and 509–543; these read CLSI…GVIP, GLIT…GPSP, NCVS…GIRP, NRVT…ILDS, DIVI…NVPA, DSVV…GVNP, DVFT…GVAP, DQIS…SLLP, EVLL…GVKP, NVYT…KIHP, DTTT…GCQP, and DIIT…GITI.

The protein belongs to the PPR family. P subfamily.

The polypeptide is Pentatricopeptide repeat-containing protein At5g24830 (Arabidopsis thaliana (Mouse-ear cress)).